A 431-amino-acid polypeptide reads, in one-letter code: Serine/threonine-protein kinase Sgk1 (431 aa).

Positions 1 to 60 (MTVKTEAAKGTLTYSRMRGMVAILIAFMKQRRMGLNDFIQKIANNSYACKHPEVQSILKI) are necessary for localization to the mitochondria. The disordered stretch occupies residues 66–92 (PELMNANPSPPPSPSQQINLGPSSNPH). The residue at position 74 (Ser-74) is a Phosphoserine. At Ser-78 the chain carries Phosphoserine; by MAPK7. The span at 81 to 91 (QQINLGPSSNP) shows a compositional bias: polar residues. In terms of domain architecture, Protein kinase spans 98-355 (FHFLKVIGKG…FMEIKSHVFF (258 aa)). ATP contacts are provided by residues 104-112 (IGKGSFGKV) and Lys-127. Residues 131-141 (KKAILKKKEEK) carry the Nuclear localization signal motif. Residue Asp-222 is the Proton acceptor of the active site. Thr-256 carries the post-translational modification Phosphothreonine; by PDPK1. Residues 356–431 (SLINWDDLIN…SYAPPTDSFL (76 aa)) enclose the AGC-kinase C-terminal domain. Thr-369 is subject to Phosphothreonine; by PKA. Residues Ser-397, Ser-401, and Ser-422 each carry the phosphoserine modification.

Belongs to the protein kinase superfamily. AGC Ser/Thr protein kinase family. As to quaternary structure, homodimer; disulfide-linked. Forms a trimeric complex with FBXW7 and NOTCH1. Interacts with MAPK3/ERK1, MAPK1/ERK2, MAP2K1/MEK1, MAP2K2/MEK2, NEDD4, NEDD4L, MAPT/TAU, MAPK7, CREB1, SLC9A3R2/NHERF2 and KCNJ1/ROMK1. Associates with the mammalian target of rapamycin complex 2 (mTORC2) via an interaction with MAPKAP1/SIN1. In terms of processing, regulated by phosphorylation. Activated by phosphorylation on Ser-422 by mTORC2, transforming it into a substrate for PDPK1 which phosphorylates it on Thr-256. Phosphorylation on Ser-397 and Ser-401 are also essential for its activity. Phosphorylation on Ser-78 by MAPK7 is required for growth factor-induced cell cycle progression. Post-translationally, ubiquitinated by NEDD4L; which promotes proteasomal degradation. Ubiquitinated by SYVN1 at the endoplasmic reticulum; which promotes rapid proteasomal degradation and maintains a high turnover rate in resting cells.

It is found in the cytoplasm. The protein localises to the nucleus. The protein resides in the endoplasmic reticulum membrane. It localises to the cell membrane. Its subcellular location is the mitochondrion. It catalyses the reaction L-seryl-[protein] + ATP = O-phospho-L-seryl-[protein] + ADP + H(+). It carries out the reaction L-threonyl-[protein] + ATP = O-phospho-L-threonyl-[protein] + ADP + H(+). With respect to regulation, two specific sites, one in the kinase domain (Thr-256) and the other in the C-terminal regulatory region (Ser-422), need to be phosphorylated for its full activation. Phosphorylation at Ser-397 and Ser-401 are also essential for its activity. Activated by WNK1, WNK2, WNK3 and WNK4; which promote phosphorylation by mTORC2. Serine/threonine-protein kinase which is involved in the regulation of a wide variety of ion channels, membrane transporters, cellular enzymes, transcription factors, neuronal excitability, cell growth, proliferation, survival, migration and apoptosis. Plays an important role in cellular stress response. Contributes to regulation of renal Na(+) retention, renal K(+) elimination, salt appetite, gastric acid secretion, intestinal Na(+)/H(+) exchange and nutrient transport, insulin-dependent salt sensitivity of blood pressure, salt sensitivity of peripheral glucose uptake, cardiac repolarization and memory consolidation. Up-regulates Na(+) channels: SCNN1A/ENAC, SCN5A and ASIC1/ACCN2, K(+) channels: KCNJ1/ROMK1, KCNA1-5, KCNQ1-5 and KCNE1, epithelial Ca(2+) channels: TRPV5 and TRPV6, chloride channels: BSND, CLCN2 and CFTR, glutamate transporters: SLC1A3/EAAT1, SLC1A2 /EAAT2, SLC1A1/EAAT3, SLC1A6/EAAT4 and SLC1A7/EAAT5, amino acid transporters: SLC1A5/ASCT2, SLC38A1/SN1 and SLC6A19, creatine transporter: SLC6A8, Na(+)/dicarboxylate cotransporter: SLC13A2/NADC1, Na(+)-dependent phosphate cotransporter: SLC34A2/NAPI-2B, glutamate receptor: GRIK2/GLUR6. Up-regulates carriers: SLC9A3/NHE3, SLC12A1/NKCC2, SLC12A3/NCC, SLC5A3/SMIT, SLC2A1/GLUT1, SLC5A1/SGLT1 and SLC15A2/PEPT2. Regulates enzymes: GSK3A/B, PMM2 and Na(+)/K(+) ATPase, and transcription factors: CTNNB1 and nuclear factor NF-kappa-B. Stimulates sodium transport into epithelial cells by enhancing the stability and expression of SCNN1A/ENAC. This is achieved by phosphorylating the NEDD4L ubiquitin E3 ligase, promoting its interaction with 14-3-3 proteins, thereby preventing it from binding to SCNN1A/ENAC and targeting it for degradation. Regulates store-operated Ca(+2) entry (SOCE) by stimulating ORAI1 and STIM1. Regulates KCNJ1/ROMK1 directly via its phosphorylation or indirectly via increased interaction with SLC9A3R2/NHERF2. Phosphorylates MDM2 and activates MDM2-dependent ubiquitination of p53/TP53. Phosphorylates MAPT/TAU and mediates microtubule depolymerization and neurite formation in hippocampal neurons. Phosphorylates SLC2A4/GLUT4 and up-regulates its activity. Phosphorylates APBB1/FE65 and promotes its localization to the nucleus. Phosphorylates MAPK1/ERK2 and activates it by enhancing its interaction with MAP2K1/MEK1 and MAP2K2/MEK2. Phosphorylates FBXW7 and plays an inhibitory role in the NOTCH1 signaling. Phosphorylates FOXO1 resulting in its relocalization from the nucleus to the cytoplasm. Phosphorylates FOXO3, promoting its exit from the nucleus and interference with FOXO3-dependent transcription. Phosphorylates BRAF and MAP3K3/MEKK3 and inhibits their activity. Phosphorylates SLC9A3/NHE3 in response to dexamethasone, resulting in its activation and increased localization at the cell membrane. Phosphorylates CREB1. Necessary for vascular remodeling during angiogenesis. In Macaca fascicularis (Crab-eating macaque), this protein is Serine/threonine-protein kinase Sgk1 (SGK1).